A 625-amino-acid chain; its full sequence is tRNA uridine 5-carboxymethylaminomethyl modification enzyme MnmG (625 aa).

Position 14 to 19 (14 to 19 (GAGHAG)) interacts with FAD. NAD(+) is bound at residue 273–287 (GPRYCPSIEDKIVRF).

It belongs to the MnmG family. Homodimer. Heterotetramer of two MnmE and two MnmG subunits. FAD serves as cofactor.

The protein resides in the cytoplasm. In terms of biological role, NAD-binding protein involved in the addition of a carboxymethylaminomethyl (cmnm) group at the wobble position (U34) of certain tRNAs, forming tRNA-cmnm(5)s(2)U34. This chain is tRNA uridine 5-carboxymethylaminomethyl modification enzyme MnmG, found in Clostridium botulinum (strain Hall / ATCC 3502 / NCTC 13319 / Type A).